The primary structure comprises 508 residues: Photosystem II CP47 reaction center protein (508 aa).

6 helical membrane passes run 21–36 (SVHI…WAGS), 101–115 (IVFS…IWHW), 140–156 (GIHL…FGAF), 203–218 (IAAG…FHLS), 237–252 (VLSS…AFVV), and 457–472 (SFAL…HGAR).

The protein belongs to the PsbB/PsbC family. PsbB subfamily. In terms of assembly, PSII is composed of 1 copy each of membrane proteins PsbA, PsbB, PsbC, PsbD, PsbE, PsbF, PsbH, PsbI, PsbJ, PsbK, PsbL, PsbM, PsbT, PsbX, PsbY, PsbZ, Psb30/Ycf12, at least 3 peripheral proteins of the oxygen-evolving complex and a large number of cofactors. It forms dimeric complexes. Binds multiple chlorophylls. PSII binds additional chlorophylls, carotenoids and specific lipids. is required as a cofactor.

It is found in the plastid. The protein resides in the chloroplast thylakoid membrane. One of the components of the core complex of photosystem II (PSII). It binds chlorophyll and helps catalyze the primary light-induced photochemical processes of PSII. PSII is a light-driven water:plastoquinone oxidoreductase, using light energy to abstract electrons from H(2)O, generating O(2) and a proton gradient subsequently used for ATP formation. The sequence is that of Photosystem II CP47 reaction center protein from Lactuca sativa (Garden lettuce).